Consider the following 127-residue polypeptide: Large ribosomal subunit protein bL17 (127 aa).

It belongs to the bacterial ribosomal protein bL17 family. In terms of assembly, part of the 50S ribosomal subunit. Contacts protein L32.

In Xanthomonas campestris pv. campestris (strain 8004), this protein is Large ribosomal subunit protein bL17.